A 562-amino-acid chain; its full sequence is Phosphoglucomutase-1 (562 aa).

Residue Met1 is modified to N-acetylmethionine. An N6-acetyllysine modification is found at Lys16. Arg23 serves as a coordination point for alpha-D-glucose 1,6-bisphosphate. Residue Thr115 is modified to Phosphothreonine. Residue Ser117 participates in alpha-D-glucose 1,6-bisphosphate binding. Catalysis depends on Ser117, which acts as the Phosphoserine intermediate. Ser117 is a Mg(2+) binding site. A phosphoserine mark is found at Ser117 and Ser134. Residue Thr185 is modified to Phosphothreonine. A phosphoserine mark is found at Ser201, Ser206, and Ser213. Mg(2+)-binding residues include Asp288, Asp290, and Asp292. Alpha-D-glucose 1,6-bisphosphate is bound by residues Asp292 and Arg293. At Lys349 the chain carries N6-acetyllysine. Position 353 is a phosphotyrosine (Tyr353). Thr357 is an alpha-D-glucose 1,6-bisphosphate binding site. Ser369 bears the Phosphoserine mark. Positions 376, 378, and 389 each coordinate alpha-D-glucose 1,6-bisphosphate. A Phosphoserine modification is found at Ser378. Lys419 bears the N6-succinyllysine mark. Residue Thr467 is modified to Phosphothreonine; by PAK1. Phosphoserine is present on residues Ser477, Ser485, and Ser505. At Thr507 the chain carries Phosphothreonine. Ser509 and Ser541 each carry phosphoserine.

The protein belongs to the phosphohexose mutase family. Monomer. It depends on Mg(2+) as a cofactor. In terms of processing, phosphorylation at Thr-467 by PAK1 significantly enhances enzymatic activity.

Its subcellular location is the cytoplasm. The catalysed reaction is alpha-D-glucose 1-phosphate = alpha-D-glucose 6-phosphate. It catalyses the reaction O-phospho-L-seryl-[protein] + alpha-D-glucose 1-phosphate = alpha-D-glucose 1,6-bisphosphate + L-seryl-[protein]. The enzyme catalyses alpha-D-glucose 1,6-bisphosphate + L-seryl-[protein] = O-phospho-L-seryl-[protein] + alpha-D-glucose 6-phosphate. With respect to regulation, glucose-1,6-bisphosphate enhances phosphorylation of the active site Ser-117, and thereby increases enzyme activity. Catalyzes the reversible isomerization of alpha-D-glucose 1-phosphate to alpha-D-glucose 6-phosphate. The mechanism proceeds via the intermediate compound alpha-D-glucose 1,6-bisphosphate. This enzyme participates in both the breakdown and synthesis of glucose. This Homo sapiens (Human) protein is Phosphoglucomutase-1 (PGM1).